The chain runs to 419 residues: Serine hydroxymethyltransferase (419 aa).

Residues Leu122 and 126-128 each bind (6S)-5,6,7,8-tetrahydrofolate; that span reads GHL. Position 231 is an N6-(pyridoxal phosphate)lysine (Lys231). Residue 354 to 356 coordinates (6S)-5,6,7,8-tetrahydrofolate; that stretch reads SPF.

The protein belongs to the SHMT family. In terms of assembly, homodimer. It depends on pyridoxal 5'-phosphate as a cofactor.

The protein localises to the cytoplasm. The catalysed reaction is (6R)-5,10-methylene-5,6,7,8-tetrahydrofolate + glycine + H2O = (6S)-5,6,7,8-tetrahydrofolate + L-serine. It functions in the pathway one-carbon metabolism; tetrahydrofolate interconversion. The protein operates within amino-acid biosynthesis; glycine biosynthesis; glycine from L-serine: step 1/1. Catalyzes the reversible interconversion of serine and glycine with tetrahydrofolate (THF) serving as the one-carbon carrier. This reaction serves as the major source of one-carbon groups required for the biosynthesis of purines, thymidylate, methionine, and other important biomolecules. Also exhibits THF-independent aldolase activity toward beta-hydroxyamino acids, producing glycine and aldehydes, via a retro-aldol mechanism. The sequence is that of Serine hydroxymethyltransferase from Exiguobacterium sibiricum (strain DSM 17290 / CCUG 55495 / CIP 109462 / JCM 13490 / 255-15).